Reading from the N-terminus, the 505-residue chain is uncharacterized protein (505 aa).

14 helical membrane passes run 9–29 (ANLT…PFIV), 49–69 (YFSV…SVAA), 86–106 (AASV…AFFI), 122–142 (LSIL…GFGA), 156–176 (IQAV…ACFA), 181–201 (QIQL…FYFF), 235–255 (IGVL…LGAS), 261–281 (AAII…ASLF), 310–330 (LLLA…LTIW), 341–361 (LLFI…LFYI), 371–391 (PAIV…TLSG), 395–415 (LGLY…NAIF), 435–455 (IIGP…IQFI), and 464–484 (LIAT…MLVC).

It localises to the cell membrane. May be involved in the production of the exopolysaccharide (EPS) component of the extracellular matrix during biofilm formation. EPS is responsible for the adhesion of chains of cells into bundles. This is an uncharacterized protein from Bacillus subtilis (strain 168).